The following is a 376-amino-acid chain: Putative peptide import ATP-binding protein BMEII0205 (376 aa).

The segment at 1–25 is disordered; sequence MPLRPALHLRTGKLRQTPTHNEPDG. Residues 64 to 314 form the ABC transporter domain; that stretch reads VRTDDLVRDF…PLHPYSRALL (251 aa). 106–113 contributes to the ATP binding site; that stretch reads GESGSGKS.

This sequence belongs to the ABC transporter superfamily. The complex is composed of two ATP-binding proteins (BMEII0205 and BMEII0206), two transmembrane proteins (BMEII0207/BMEII0208 and BMEII0209) and a solute-binding protein (BMEII0210).

It is found in the cell inner membrane. Probably part of an ABC transporter complex that could be involved in peptide import. Probably responsible for energy coupling to the transport system. The sequence is that of Putative peptide import ATP-binding protein BMEII0205 from Brucella melitensis biotype 1 (strain ATCC 23456 / CCUG 17765 / NCTC 10094 / 16M).